The chain runs to 534 residues: Prolyl 4-hydroxylase subunit alpha-1 (534 aa).

An N-terminal signal peptide occupies residues 1–17 (MIWGVLMMGILLPQCSA). The N-linked (GlcNAc...) asparagine glycan is linked to N113. Residues 205–238 (VSVLDYLSYAVYQQGDLDKALLLTKKLLELDPEH) form a TPR repeat. N-linked (GlcNAc...) asparagine glycosylation is present at N259. Residues 411-519 (TAEELQVANY…KWVSNKWLHE (109 aa)) form the Fe2OG dioxygenase domain. Fe cation-binding residues include H429, D431, and H500. Position 510 (K510) interacts with 2-oxoglutarate.

It belongs to the P4HA family. In terms of assembly, heterotetramer of two alpha-1 chains and two beta chains (P4HB)(the beta chain is the multi-functional PDI), where P4HB plays the role of a structural subunit; this tetramer catalyzes the formation of 4-hydroxyproline in collagen. The cofactor is Fe(2+). Requires L-ascorbate as cofactor.

The protein localises to the endoplasmic reticulum lumen. It catalyses the reaction L-prolyl-[collagen] + 2-oxoglutarate + O2 = trans-4-hydroxy-L-prolyl-[collagen] + succinate + CO2. In terms of biological role, catalyzes the post-translational formation of 4-hydroxyproline in -Xaa-Pro-Gly- sequences in collagens and other proteins. The chain is Prolyl 4-hydroxylase subunit alpha-1 (P4ha1) from Rattus norvegicus (Rat).